The primary structure comprises 323 residues: Acetyl-coenzyme A carboxylase carboxyl transferase subunit alpha (323 aa).

The CoA carboxyltransferase C-terminal domain occupies 35-296 (EVLSELDELR…GMTLKKCLDE (262 aa)).

It belongs to the AccA family. As to quaternary structure, acetyl-CoA carboxylase is a heterohexamer composed of biotin carboxyl carrier protein (AccB), biotin carboxylase (AccC) and two subunits each of ACCase subunit alpha (AccA) and ACCase subunit beta (AccD).

The protein localises to the cytoplasm. The enzyme catalyses N(6)-carboxybiotinyl-L-lysyl-[protein] + acetyl-CoA = N(6)-biotinyl-L-lysyl-[protein] + malonyl-CoA. It functions in the pathway lipid metabolism; malonyl-CoA biosynthesis; malonyl-CoA from acetyl-CoA: step 1/1. Component of the acetyl coenzyme A carboxylase (ACC) complex. First, biotin carboxylase catalyzes the carboxylation of biotin on its carrier protein (BCCP) and then the CO(2) group is transferred by the carboxyltransferase to acetyl-CoA to form malonyl-CoA. The sequence is that of Acetyl-coenzyme A carboxylase carboxyl transferase subunit alpha from Aquifex aeolicus (strain VF5).